A 147-amino-acid chain; its full sequence is Endothelial differentiation-related factor 1 homolog (147 aa).

Residues 1–69 (MAESDWDTVT…KLDRETEELH (69 aa)) are disordered. Over residues 33 to 42 (RRGEEVETSK) the composition is skewed to basic and acidic residues. Residues 46–58 (AGQNKQHTITRNT) show a composition bias toward polar residues. Basic and acidic residues predominate over residues 59–69 (AKLDRETEELH). The region spanning 81 to 135 (IQQGRQGKGMTQKDLATKINEKPQVIADYECGKAIPNNQVMGKIERVIGLKLRGK) is the HTH cro/C1-type domain. The H-T-H motif DNA-binding region spans 92-111 (QKDLATKINEKPQVIADYEC).

The protein localises to the nucleus. Functionally, probable transcriptional coactivator. The protein is Endothelial differentiation-related factor 1 homolog (edf1) of Xenopus laevis (African clawed frog).